We begin with the raw amino-acid sequence, 926 residues long: BTB/POZ domain-containing protein KCTD19 (926 aa).

The BTB 1 domain occupies 18–72 (NVGGWHFSVPRSKLSQFPDSLLWKEASALTSSESQRLFIDRDGSTFRHVHYYLYT). Serine 270 carries the post-translational modification Phosphoserine. The BTB 2 domain maps to 398–485 (IKVYVGSHWY…YHIPSLSEAL (88 aa)). Residues 673-751 (GSEAASQPST…PAPEQPLPEA (79 aa)) form a disordered region. A compositionally biased stretch (basic and acidic residues) spans 730-742 (DWSKQRTKERESP).

In terms of assembly, identified in a complex with ZNF541, HDAC1 and HSPA2. Identified in a complex with ZNF541 and HDAC1. Identified in a complex with HDAC1, HDAC2, DNTTIP1 and ZNF541.

The protein resides in the nucleus. In terms of biological role, transcription regulator which is essential for male fertility and for the completion of meiotic prophase in spermatocytes. Regulates progression of the pachytene stage of meiotic prophase and promotes the transcriptional activation activity ZNF541. Required for the organization of chromosomes during metaphase I. In Homo sapiens (Human), this protein is BTB/POZ domain-containing protein KCTD19 (KCTD19).